Here is a 432-residue protein sequence, read N- to C-terminus: Asparagine--tRNA ligase (432 aa).

It belongs to the class-II aminoacyl-tRNA synthetase family. As to quaternary structure, homodimer.

It localises to the cytoplasm. It catalyses the reaction tRNA(Asn) + L-asparagine + ATP = L-asparaginyl-tRNA(Asn) + AMP + diphosphate + H(+). In Lactobacillus gasseri (strain ATCC 33323 / DSM 20243 / BCRC 14619 / CIP 102991 / JCM 1131 / KCTC 3163 / NCIMB 11718 / NCTC 13722 / AM63), this protein is Asparagine--tRNA ligase.